Consider the following 541-residue polypeptide: Chloride channel CLIC-like protein 1 (541 aa).

An N-terminal signal peptide occupies residues 1–18 (MLCSLLLCGCLLLITGYA). At 19-184 (HDDDWIDPTD…EDYFGVDPYN (166 aa)) the chain is on the lumenal side. A helical membrane pass occupies residues 185 to 205 (VFMVLLCLLCIVALVATELWT). Residues 206 to 217 (YVRWHTQLKRVC) lie on the Cytoplasmic side of the membrane. A helical membrane pass occupies residues 218–238 (IISFLVSLGWNWIYLYKVAFA). Residues 239–329 (QHQANVAKMA…GEFIKALMKE (91 aa)) are Lumenal-facing. The helical transmembrane segment at 330-350 (IPVLLQIPVLVILALAVLGFC) threads the bilayer. Topologically, residues 351-541 (YGAGQSVPML…GTDPVSSPCG (191 aa)) are cytoplasmic. The segment at 362–381 (HFRGPEREPPRALEPDDRRR) is disordered. Positions 364–381 (RGPEREPPRALEPDDRRR) are enriched in basic and acidic residues. Residues Ser-434 and Ser-438 each carry the phosphoserine modification. A Phosphothreonine modification is found at Thr-482. Ser-504 is subject to Phosphoserine. The segment covering 511–522 (QLKTDSECRPHS) has biased composition (basic and acidic residues). The tract at residues 511–541 (QLKTDSECRPHSTEAAAAAARGTDPVSSPCG) is disordered.

This sequence belongs to the chloride channel MCLC family. As to quaternary structure, homomultimers. Interacts with mitochondrial protein PIGBOS1 (via C-terminus); the interaction occurs at the mitochondria-associated endoplasmic reticulum (ER) membrane, a zone of contact between the ER and mitochondrial membranes, but does not appear to play a role in ER-mitochondria tethering and is not affected by ER stress. Interacts with CALR. Expressed in testis (spermatocytes), liver and lung (at protein level). Expressed in spleen, liver, testis, kidney, heart, brain and lung.

The protein localises to the endoplasmic reticulum membrane. It carries out the reaction chloride(in) = chloride(out). It catalyses the reaction bromide(in) = bromide(out). The catalysed reaction is nitrate(in) = nitrate(out). The enzyme catalyses fluoride(in) = fluoride(out). In terms of biological role, anion-selective channel with Ca(2+)-dependent and voltage-independent gating. Permeable to small monovalent anions with selectivity for bromide &gt; chloride &gt; nitrate &gt; fluoride. Operates in the endoplasmic reticulum (ER) membrane where it mediates chloride efflux to compensate for the loss of positive charges from the ER lumen upon Ca(2+) release. Contributes to the maintenance of ER Ca(2+) pools and activation of unfolded protein response to prevent accumulation of misfolded proteins in the ER lumen. Particularly involved in ER homeostasis mechanisms underlying motor neurons and retinal photoreceptors survival. The polypeptide is Chloride channel CLIC-like protein 1 (Rattus norvegicus (Rat)).